Reading from the N-terminus, the 503-residue chain is Nondiscriminating glutamyl-tRNA synthetase EARS2, mitochondrial (503 aa).

A mitochondrion-targeting transit peptide spans 1–22; that stretch reads MKILRGVSRQMCTSRPEVRVRF. Residue 21 to 23 coordinates L-glutamate; sequence RFA. A 'HIGH' region motif is present at residues 26–34; it reads PTGFLHLGG. ATP is bound at residue H31. L-glutamate is bound by residues E57, 209–213, and R227; that span reads YHLAS. ATP is bound by residues E230 and 265–269; that span reads KLSKR. A 'KMSKS' region motif is present at residues 265–269; sequence KLSKR.

It belongs to the class-I aminoacyl-tRNA synthetase family. Glutamate--tRNA ligase type 1 subfamily.

The protein resides in the mitochondrion matrix. It catalyses the reaction tRNA(Glx) + L-glutamate + ATP = L-glutamyl-tRNA(Glx) + AMP + diphosphate. It carries out the reaction tRNA(Glu) + L-glutamate + ATP = L-glutamyl-tRNA(Glu) + AMP + diphosphate. The catalysed reaction is tRNA(Gln) + L-glutamate + ATP = L-glutamyl-tRNA(Gln) + AMP + diphosphate. In terms of biological role, non-discriminating glutamyl-tRNA synthetase that catalyzes aminoacylation of both mitochondrial tRNA(Glu) and tRNA(Gln) and participates in RNA aminoacylation for mitochondrial protein translation. Attachs glutamate to tRNA(Glu) or tRNA(Gln) in a two-step reaction: glutamate is first activated by ATP to form Glu-AMP and then transferred to the acceptor end of tRNA(Glu) or tRNA(Gln). The chain is Nondiscriminating glutamyl-tRNA synthetase EARS2, mitochondrial from Danio rerio (Zebrafish).